The chain runs to 383 residues: Acetylornithine deacetylase (383 aa).

His-80 serves as a coordination point for Zn(2+). The active site involves Asp-82. Asp-112 is a binding site for Zn(2+). The active site involves Glu-144. Residues Glu-145, Glu-169, and His-355 each contribute to the Zn(2+) site.

It belongs to the peptidase M20A family. ArgE subfamily. As to quaternary structure, homodimer. It depends on Zn(2+) as a cofactor. Requires Co(2+) as cofactor. Glutathione serves as cofactor.

It localises to the cytoplasm. The enzyme catalyses N(2)-acetyl-L-ornithine + H2O = L-ornithine + acetate. Its pathway is amino-acid biosynthesis; L-arginine biosynthesis; L-ornithine from N(2)-acetyl-L-ornithine (linear): step 1/1. Functionally, catalyzes the hydrolysis of the amide bond of N(2)-acetylated L-amino acids. Cleaves the acetyl group from N-acetyl-L-ornithine to form L-ornithine, an intermediate in L-arginine biosynthesis pathway, and a branchpoint in the synthesis of polyamines. This Shigella flexneri protein is Acetylornithine deacetylase.